Reading from the N-terminus, the 142-residue chain is Gonadotropin subunit beta-2 (142 aa).

An N-terminal signal peptide occupies residues 1–23 (MLGLHVGTLISLFLCILLEPVEG). 6 disulfide bridges follow: cysteine 29–cysteine 77, cysteine 43–cysteine 92, cysteine 46–cysteine 130, cysteine 54–cysteine 108, cysteine 58–cysteine 110, and cysteine 113–cysteine 120. A glycan (N-linked (GlcNAc...) asparagine) is linked at asparagine 33.

The protein belongs to the glycoprotein hormones subunit beta family. Heterodimer of an alpha and a beta chain.

The protein resides in the secreted. Involved in gametogenesis and steroidogenesis. The polypeptide is Gonadotropin subunit beta-2 (cgbb) (Oncorhynchus keta (Chum salmon)).